The sequence spans 641 residues: Chaperone protein DnaK (641 aa).

Thr-200 is modified (phosphothreonine; by autocatalysis). Over residues 606–623 (AEQGGNADAASGNAQASK) the composition is skewed to low complexity. Positions 606–627 (AEQGGNADAASGNAQASKAADD) are disordered.

This sequence belongs to the heat shock protein 70 family.

Its function is as follows. Acts as a chaperone. This Xanthomonas euvesicatoria pv. vesicatoria (strain 85-10) (Xanthomonas campestris pv. vesicatoria) protein is Chaperone protein DnaK.